The primary structure comprises 122 residues: Small ribosomal subunit protein uS12c (122 aa).

It belongs to the universal ribosomal protein uS12 family. Part of the 30S ribosomal subunit.

Its subcellular location is the plastid. It is found in the chloroplast. In terms of biological role, with S4 and S5 plays an important role in translational accuracy. Located at the interface of the 30S and 50S subunits. This is Small ribosomal subunit protein uS12c (rps12) from Illicium oligandrum (Star anise).